The sequence spans 259 residues: Adenylosuccinate synthetase (259 aa).

Residues 3-9 (GDEGKGK) and 31-33 (GHT) each bind GTP. Asp-4 serves as the catalytic Proton acceptor. Mg(2+) is bound by residues Asp-4 and Gly-31. IMP is bound at residue 4-7 (DEGK). The active-site Proton donor is the His-32. The IMP site is built by Thr-120, Arg-134, Gln-215, and Thr-230.

The protein belongs to the adenylosuccinate synthetase family. In terms of assembly, homodimer. Mg(2+) serves as cofactor.

It is found in the cytoplasm. It catalyses the reaction IMP + L-aspartate + GTP = N(6)-(1,2-dicarboxyethyl)-AMP + GDP + phosphate + 2 H(+). Its pathway is purine metabolism; AMP biosynthesis via de novo pathway; AMP from IMP: step 1/2. Functionally, plays an important role in the de novo pathway of purine nucleotide biosynthesis. Catalyzes the first committed step in the biosynthesis of AMP from IMP. The polypeptide is Adenylosuccinate synthetase (Aggregatibacter actinomycetemcomitans (Actinobacillus actinomycetemcomitans)).